A 745-amino-acid polypeptide reads, in one-letter code: Polyribonucleotide nucleotidyltransferase (745 aa).

Positions 487 and 493 each coordinate Mg(2+). The KH domain occupies 554–613 (PRIETMQIPTDKIRDVIGTGGKIIREIVEKTGAKINIEDTGIVKIASSDGKAIKAAYNWI). The 69-residue stretch at 623 to 691 (GTIYDGTIVK…ERGKIRLSMK (69 aa)) folds into the S1 motif domain. A disordered region spans residues 695 to 745 (QETGEDLTEKLKAERAERGEPEREERSDRGDRGDRGPRRDRGERRRESSGE). Basic and acidic residues predominate over residues 701–745 (LTEKLKAERAERGEPEREERSDRGDRGDRGPRRDRGERRRESSGE).

It belongs to the polyribonucleotide nucleotidyltransferase family. The cofactor is Mg(2+).

Its subcellular location is the cytoplasm. The enzyme catalyses RNA(n+1) + phosphate = RNA(n) + a ribonucleoside 5'-diphosphate. Functionally, involved in mRNA degradation. Catalyzes the phosphorolysis of single-stranded polyribonucleotides processively in the 3'- to 5'-direction. In Methylorubrum extorquens (strain CM4 / NCIMB 13688) (Methylobacterium extorquens), this protein is Polyribonucleotide nucleotidyltransferase.